The primary structure comprises 462 residues: L-seryl-tRNA(Sec) selenium transferase (462 aa).

Lysine 293 bears the N6-(pyridoxal phosphate)lysine mark.

This sequence belongs to the SelA family. Requires pyridoxal 5'-phosphate as cofactor.

The protein resides in the cytoplasm. The catalysed reaction is L-seryl-tRNA(Sec) + selenophosphate + H(+) = L-selenocysteinyl-tRNA(Sec) + phosphate. The protein operates within aminoacyl-tRNA biosynthesis; selenocysteinyl-tRNA(Sec) biosynthesis; selenocysteinyl-tRNA(Sec) from L-seryl-tRNA(Sec) (bacterial route): step 1/1. In terms of biological role, converts seryl-tRNA(Sec) to selenocysteinyl-tRNA(Sec) required for selenoprotein biosynthesis. The polypeptide is L-seryl-tRNA(Sec) selenium transferase (Clostridium botulinum (strain ATCC 19397 / Type A)).